Reading from the N-terminus, the 261-residue chain is DNA repair protein RecO (261 aa).

It belongs to the RecO family.

Involved in DNA repair and RecF pathway recombination. The protein is DNA repair protein RecO of Chlorobium phaeobacteroides (strain DSM 266 / SMG 266 / 2430).